We begin with the raw amino-acid sequence, 635 residues long: MHLSEIVHPNQLHGLSISELKQIANQIREKHLDTVATSGGHLGPGLGVVELTLALYQTLDLDQDKVVWDVGHQAYPHKLITGRYERFHTLRQKDGVAGYLNRRESKFDHFGAGHASTSISSVLGMALARDAKGENFKTVAVIGDGAMTGGMALEAINHAGHLPHTRMLVILNDNDMSISPNVGAMSRYLNKMRLSPPIQFLSDNFEEQLKQLPFGEQVAPDLKRLKGGMKRLAVSKVGAVFEELGFTYIGPVDGHSLEELLATFKEAHLHEGPVLVHVATTKGKGYAIAEQDQVSYHAQSPFNLETGKAKPSNKPKPPSYSKVFAETLIKMAENDIRVVGITAAMATGTGLDKLQAKLPKQYIDVGIAEQHAVTLAAGMACEGMRPVVAIYSTFLQRGYDQIIHDVCIQNLPVFFCLDRAGIVGADGPTHQGMYDIAYLRCLPNMVMMAPKDEAELQQMLVTGINYTDGPIAMRYPRGSGLGVGLMEEGWEPLPIGKAETLRHGDDVLLLAYGTMVNLASQVADMLTEHGVRATVVNARFAKPLDTELIIPLAQKIGQVVTLEEGCLPGGFGSAVLEALMDHQVMAPVTRIGVPDQLVEHATPDQSKAELGLTPAQVAERVLGLLKQKPAPSYVS.

Thiamine diphosphate-binding positions include H72 and 113 to 115 (GHA). D144 lines the Mg(2+) pocket. Residues 145 to 146 (GA), N174, Y286, and E369 contribute to the thiamine diphosphate site. N174 contacts Mg(2+).

It belongs to the transketolase family. DXPS subfamily. Homodimer. Mg(2+) serves as cofactor. Requires thiamine diphosphate as cofactor.

It carries out the reaction D-glyceraldehyde 3-phosphate + pyruvate + H(+) = 1-deoxy-D-xylulose 5-phosphate + CO2. The protein operates within metabolic intermediate biosynthesis; 1-deoxy-D-xylulose 5-phosphate biosynthesis; 1-deoxy-D-xylulose 5-phosphate from D-glyceraldehyde 3-phosphate and pyruvate: step 1/1. Catalyzes the acyloin condensation reaction between C atoms 2 and 3 of pyruvate and glyceraldehyde 3-phosphate to yield 1-deoxy-D-xylulose-5-phosphate (DXP). This is 1-deoxy-D-xylulose-5-phosphate synthase from Acaryochloris marina (strain MBIC 11017).